The following is a 188-amino-acid chain: Der GTPase-activating protein YihI (188 aa).

Disordered stretches follow at residues 1-80 (MKQP…VPVP) and 162-188 (DEDD…KDTF). Residues 27–37 (TRDELDAEARD) are compositionally biased toward basic and acidic residues. The span at 47–57 (NRSGARTNVEG) shows a compositional bias: polar residues.

Belongs to the YihI family. Interacts with Der.

In terms of biological role, a GTPase-activating protein (GAP) that modifies Der/EngA GTPase function. May play a role in ribosome biogenesis. This chain is Der GTPase-activating protein YihI, found in Yersinia pseudotuberculosis serotype O:3 (strain YPIII).